A 405-amino-acid polypeptide reads, in one-letter code: Argininosuccinate synthase (405 aa).

Residues 10 to 18 (AYSGGVDTS) and Ala-38 contribute to the ATP site. Tyr-89 contacts L-citrulline. Position 119 (Gly-119) interacts with ATP. Residues Thr-121, Asn-125, and Asp-126 each contribute to the L-aspartate site. Asn-125 provides a ligand contact to L-citrulline. L-citrulline is bound by residues Arg-129, Ser-177, Ser-186, Glu-262, and Tyr-274.

The protein belongs to the argininosuccinate synthase family. Type 1 subfamily. Homotetramer.

It localises to the cytoplasm. It catalyses the reaction L-citrulline + L-aspartate + ATP = 2-(N(omega)-L-arginino)succinate + AMP + diphosphate + H(+). It participates in amino-acid biosynthesis; L-arginine biosynthesis; L-arginine from L-ornithine and carbamoyl phosphate: step 2/3. The polypeptide is Argininosuccinate synthase (Synechococcus sp. (strain RCC307)).